A 431-amino-acid polypeptide reads, in one-letter code: MAKIINVIGREIMDSRGNPTVEAEVHLEGGFNGMAAAPSGASTGSREALELRDGDKARYLGKGVLTAVANINGPIRDALMGKDATAQAELDQLMIDLDGTENKDKLGANAILAVSLAAAKAAAAFKGMPLYAHIAELNGTPGQFSMPVPMMNILNGGEHADNNVDIQEFMVQPVGAKTFREALRVGAEIFHSLKKVLQEKGLSTSVGDEGGFAPNLASNADALAMIKVAVEKAGYKLGEDVTLALDCAASEFYKDGQYDLTGEGKVFSANGFSDFLKSLTEEYPIASIEDGLDESDWEGWAYQTQIMGDKIQLVGDDLFVTNTKILKRGIDNNIANSILIKFNQIGSLTETLAAIRMAKEAGYTVVISHRSGETEDATIADLAVATSAGQIKTGSLCRSDRVAKYNQLLRIEEQLGEKAPYRGRSEIKGQA.

Glutamine 167 serves as a coordination point for (2R)-2-phosphoglycerate. Glutamate 209 functions as the Proton donor in the catalytic mechanism. Mg(2+) is bound by residues aspartate 246, glutamate 289, and aspartate 316. Residues lysine 341, arginine 370, serine 371, and lysine 392 each coordinate (2R)-2-phosphoglycerate. The Proton acceptor role is filled by lysine 341.

The protein belongs to the enolase family. Component of the RNA degradosome, a multiprotein complex involved in RNA processing and mRNA degradation. It depends on Mg(2+) as a cofactor.

Its subcellular location is the cytoplasm. It is found in the secreted. The protein resides in the cell surface. It catalyses the reaction (2R)-2-phosphoglycerate = phosphoenolpyruvate + H2O. It functions in the pathway carbohydrate degradation; glycolysis; pyruvate from D-glyceraldehyde 3-phosphate: step 4/5. Functionally, catalyzes the reversible conversion of 2-phosphoglycerate (2-PG) into phosphoenolpyruvate (PEP). It is essential for the degradation of carbohydrates via glycolysis. The polypeptide is Enolase (Shewanella woodyi (strain ATCC 51908 / MS32)).